The primary structure comprises 132 residues: MSNKFLGTWKLVSSENFDEYMKALGVGLATRKLGNLAKPRVIISKKGDIITIRTESPFKNTEISFKLGQEFEETTADNRKTKSTVTLARGSLNQVQKWDGNETTIKRKLVDGKMVVECKMKDVVCTRIYEKV.

An N-acetylserine modification is found at Ser2. Arg107 is a (9Z)-octadecenoate binding site. Arg107 contributes to the hexadecanoate binding site. Cys118 and Cys125 are oxidised to a cystine. 127-129 (RIY) contributes to the (9Z)-octadecenoate binding site. 127 to 129 (RIY) serves as a coordination point for hexadecanoate.

It belongs to the calycin superfamily. Fatty-acid binding protein (FABP) family. As to quaternary structure, monomer.

The protein resides in the cytoplasm. Functionally, may play a role in lipid transport protein in Schwann cells. May bind cholesterol. The chain is Myelin P2 protein (PMP2) from Bos taurus (Bovine).